We begin with the raw amino-acid sequence, 61 residues long: Beta-insect depressant toxin BmKIT2 (61 aa).

The region spanning 1-61 (DGYIKGKSGC…TWKSESNTCG (61 aa)) is the LCN-type CS-alpha/beta domain. 4 disulfide bridges follow: C10/C60, C14/C35, C21/C42, and C25/C44. Residue G61 is modified to Glycine amide.

The protein belongs to the long (4 C-C) scorpion toxin superfamily. Sodium channel inhibitor family. Beta subfamily. Expressed by the venom gland.

The protein resides in the secreted. On insects, this depressant beta-toxins cause a transient contraction paralysis followed by a slow flaccid paralysis. They bind voltage-independently at site-4 of sodium channels (Nav) and shift the voltage of activation toward more negative potentials thereby affecting sodium channel activation and promoting spontaneous and repetitive firing. This toxin is active against insects and mammals. It is capable of binding to not only cockroach neuronal membranes, but also rat cerebrocortical and hippocampal synaptosomes. This toxin also has potent peripheral and central suppressive effects on rat nociceptive spontaneous responses, thermal hyperalgesia and spinal c-Fos expression induced by formalin and carrageenan, which may be derived from its modulation on the activity of sodium channels of the neurons. Administration of BmKIT2 into rat brain can also suppress the epileptic seizures significantly. The polypeptide is Beta-insect depressant toxin BmKIT2 (Olivierus martensii (Manchurian scorpion)).